The sequence spans 433 residues: 23S rRNA (uracil(1939)-C(5))-methyltransferase RlmD (433 aa).

One can recognise a TRAM domain in the interval 10–68 (RTTTRQIITVSVNDLDSFGQGVARHNGKTLFIPGLLPQENAEVTVTEDKKQYARAKVVR). 4 residues coordinate [4Fe-4S] cluster: Cys81, Cys87, Cys90, and Cys162. Positions 265, 294, 299, 315, 342, and 363 each coordinate S-adenosyl-L-methionine. Cys389 functions as the Nucleophile in the catalytic mechanism.

This sequence belongs to the class I-like SAM-binding methyltransferase superfamily. RNA M5U methyltransferase family. RlmD subfamily.

The catalysed reaction is uridine(1939) in 23S rRNA + S-adenosyl-L-methionine = 5-methyluridine(1939) in 23S rRNA + S-adenosyl-L-homocysteine + H(+). Functionally, catalyzes the formation of 5-methyl-uridine at position 1939 (m5U1939) in 23S rRNA. The sequence is that of 23S rRNA (uracil(1939)-C(5))-methyltransferase RlmD from Escherichia coli O157:H7.